Reading from the N-terminus, the 312-residue chain is MNEEVEDGEVKPLELSSEDKAILVETLKNKLQALAEQHVDVLESLAPSVRKRVDVLMEIQSQHDELEVKFFEEKAALEAKYQKLYGPLYSKRSKIVSGVLEVQGETEEREEKGVPDFWLNAMKNNEILAEEIHESDEEALKYLKDIKWCRIDDPKGFKFEFFFYTNPFFKNQVLTKTYHMIDEDDEPILEKAIGTEIEWHPGYCLTQEVLTKESSESTKPITKTEECESFFNFFSPPQVPDDDAKIDENTAEELQNQMERDYDIASTLRDKIIPHAVSWFTREAVQDEDYGASWVDDEEEDDNNDEYSDEEA.

Residues 24–78 are a coiled coil; sequence VETLKNKLQALAEQHVDVLESLAPSVRKRVDVLMEIQSQHDELEVKFFEEKAALE. The Nuclear export signal signature appears at 45 to 60; that stretch reads LAPSVRKRVDVLMEIQ. Residues 289 to 312 form a disordered region; it reads DYGASWVDDEEEDDNNDEYSDEEA.

This sequence belongs to the nucleosome assembly protein (NAP) family.

It localises to the nucleus. The protein localises to the cytoplasm. Its function is as follows. May modulate chromatin structure by regulation of nucleosome assembly/disassembly. In Oryza sativa subsp. japonica (Rice), this protein is Nucleosome assembly protein 1-like 4.